A 254-amino-acid polypeptide reads, in one-letter code: Nickel import ATP-binding protein NikO (254 aa).

An ABC transporter domain is found at 5–246 (FELQGVQFAY…TALLRRARLL (242 aa)). An ATP-binding site is contributed by 37 to 44 (GANGSGKS).

The protein belongs to the ABC transporter superfamily. As to quaternary structure, forms an energy-coupling factor (ECF) transporter complex composed of an ATP-binding protein (A component, NikO), a transmembrane protein (T component, NikQ) and a fused possible substrate-capture protein (S component, NikMN) of unknown stoichimetry.

The protein resides in the cell inner membrane. The catalysed reaction is Ni(2+)(out) + ATP + H2O = Ni(2+)(in) + ADP + phosphate + H(+). Functionally, part of the energy-coupling factor (ECF) transporter complex NikMNQO involved in nickel import. The complex confers nickel uptake upon expression in E.coli. Shows very low activity with cobalt. Presumably responsible for energy coupling to the transport system. The chain is Nickel import ATP-binding protein NikO from Rhodobacter capsulatus (strain ATCC BAA-309 / NBRC 16581 / SB1003).